Here is a 434-residue protein sequence, read N- to C-terminus: 4-hydroxy-3-methylbut-2-en-1-yl diphosphate synthase (flavodoxin) (434 aa).

Positions 1 to 15 (MQSEAQSPRSSQICS) are enriched in polar residues. Positions 1-20 (MQSEAQSPRSSQICSTEPVF) are disordered. Residues C322, C325, C368, and E375 each coordinate [4Fe-4S] cluster.

This sequence belongs to the IspG family. The cofactor is [4Fe-4S] cluster.

It catalyses the reaction (2E)-4-hydroxy-3-methylbut-2-enyl diphosphate + oxidized [flavodoxin] + H2O + 2 H(+) = 2-C-methyl-D-erythritol 2,4-cyclic diphosphate + reduced [flavodoxin]. The protein operates within isoprenoid biosynthesis; isopentenyl diphosphate biosynthesis via DXP pathway; isopentenyl diphosphate from 1-deoxy-D-xylulose 5-phosphate: step 5/6. In terms of biological role, converts 2C-methyl-D-erythritol 2,4-cyclodiphosphate (ME-2,4cPP) into 1-hydroxy-2-methyl-2-(E)-butenyl 4-diphosphate. This chain is 4-hydroxy-3-methylbut-2-en-1-yl diphosphate synthase (flavodoxin), found in Burkholderia mallei (strain ATCC 23344).